Consider the following 300-residue polypeptide: Platelet-derived growth factor D (300 aa).

In terms of domain architecture, CUB spans 1–114 (QVTGNGHVQS…PGFKIYYSFV (114 aa)). A disulfide bridge links cysteine 53 with cysteine 75. N-linked (GlcNAc...) asparagine glycosylation occurs at asparagine 220.

It belongs to the PDGF/VEGF growth factor family. In terms of assembly, homodimer; disulfide-linked. Interacts with PDGFRB homodimers, and with heterodimers formed by PDGFRA and PDGFRB. In terms of processing, activated by proteolytic cleavage. Proteolytic removal of the N-terminal CUB domain releasing the core domain is necessary for unmasking the receptor-binding epitopes of the core domain. Cleavage after Arg-191 or Arg-193 by urokinase plasminogen activator gives rise to the active form.

Its subcellular location is the secreted. Functionally, growth factor that plays an essential role in the regulation of embryonic development, cell proliferation, cell migration, survival and chemotaxis. Potent mitogen for cells of mesenchymal origin. Plays an important role in wound healing. Induces macrophage recruitment, increased interstitial pressure, and blood vessel maturation during angiogenesis. Can initiate events that lead to a mesangial proliferative glomerulonephritis, including influx of monocytes and macrophages and production of extracellular matrix. The chain is Platelet-derived growth factor D (PDGFD) from Oryctolagus cuniculus (Rabbit).